The chain runs to 216 residues: uncharacterized protein (216 aa).

It is found in the plastid. Its subcellular location is the chloroplast. This is an uncharacterized protein from Pyropia yezoensis (Susabi-nori).